Reading from the N-terminus, the 816-residue chain is Leucine--tRNA ligase (816 aa).

The 'HIGH' region motif lies at 40 to 51 (SYPSGAQLHAGH). The short motif at 576 to 580 (KMSKS) is the 'KMSKS' region element. Residue K579 coordinates ATP.

It belongs to the class-I aminoacyl-tRNA synthetase family.

It localises to the cytoplasm. The catalysed reaction is tRNA(Leu) + L-leucine + ATP = L-leucyl-tRNA(Leu) + AMP + diphosphate. This Clostridium beijerinckii (strain ATCC 51743 / NCIMB 8052) (Clostridium acetobutylicum) protein is Leucine--tRNA ligase.